The following is a 492-amino-acid chain: Monocarboxylate transporter 3 (492 aa).

Residues 1 to 14 (MGAGGPRRGAGPPD) are Cytoplasmic-facing. A helical membrane pass occupies residues 15-35 (GGWGWVVLGACFVVTGFAYGF). Topologically, residues 36–58 (PKAVSVFFRELKRDFGAGYSDTA) are extracellular. A helical transmembrane segment spans residues 59 to 79 (WVSSIMLAMLYGTGPLSSILV). Topologically, residues 80–85 (TRFGCR) are cytoplasmic. The helical transmembrane segment at 86–106 (PVMLAGGLLASAGMILASFAS) threads the bilayer. Topologically, residues 107 to 115 (RLVELYLTA) are extracellular. The helical transmembrane segment at 116–136 (GVLTGLGLALNFQPSLIMLGL) threads the bilayer. The Cytoplasmic segment spans residues 137 to 146 (YFERRRPLAN). The chain crosses the membrane as a helical span at residues 147-167 (GLAAAGSPVFLSMLSPLGQLL). Over 168–172 (GERFG) the chain is Extracellular. The helical transmembrane segment at 173–193 (WRGGFLLFGGLLLHCCACGAV) threads the bilayer. Residues 194 to 228 (MRPPPGPPPRRDPSPHGGPARRRRLLDVAVCTDRA) lie on the Cytoplasmic side of the membrane. Residues 229–249 (FVVYVVTKFLMALGLFVPAIL) form a helical membrane-spanning segment. The Extracellular segment spans residues 250-257 (LVNYAKDA). Residues 258 to 278 (GVPDAEAAFLLSIVGFVDIVA) traverse the membrane as a helical segment. Residues 279–293 (RPACGALAGLGRLRP) lie on the Cytoplasmic side of the membrane. Residues 294–314 (HVPYLFSLALLANGLTDLISA) form a helical membrane-spanning segment. At 315–318 (RARS) the chain is on the extracellular side. The chain crosses the membrane as a helical span at residues 319–339 (YGTLVAFCIAFGLSYGMVGAL). At 340–352 (QFEVLMATVGAPR) the chain is on the cytoplasmic side. Residues 353-373 (FPSALGLVLLVEAVAVLIGPP) form a helical membrane-spanning segment. Topologically, residues 374–386 (SAGRLVDALKNYE) are extracellular. The helical transmembrane segment at 387–407 (IIFYLAGSEVALAGVFMAVTT) threads the bilayer. Topologically, residues 408–492 (YCCLRCSKNI…GGHEARGQKA (85 aa)) are cytoplasmic. The disordered stretch occupies residues 419 to 492 (SGRSAEGGAS…GGHEARGQKA (74 aa)). 2 basolateral sorting signal regions span residues 426-460 (GASD…VLSP) and 461-482 (RAGS…HESI). Residues 476 to 492 (ELDHESIGGHEARGQKA) show a composition bias toward basic and acidic residues.

It belongs to the major facilitator superfamily. Monocarboxylate porter (TC 2.A.1.13) family. In terms of tissue distribution, expressed exclusively in retinal pigment epithelium and choroid plexus epithelium.

Its subcellular location is the basolateral cell membrane. The enzyme catalyses (S)-lactate(in) + H(+)(in) = (S)-lactate(out) + H(+)(out). In terms of biological role, probable retinal pigment epithelium (RPE)-specific proton-coupled L-lactate transporter. May facilitate transport of lactate and H(+) out of the retina and could therefore play an essential role in maintenance of metabolic and ionic homeostasis of the outer retina. This chain is Monocarboxylate transporter 3 (Slc16a8), found in Mus musculus (Mouse).